A 209-amino-acid polypeptide reads, in one-letter code: Cyclin-dependent kinase inhibitor 2 (209 aa).

Residues 1 to 32 form a required for nuclear localization region; sequence MAAVRRRERDVVEENGVTTTTVKRRKMEEEVD.

The protein belongs to the CDI family. ICK/KRP subfamily. Specifically interacts with CDKA-1, but not with CDKB1-1. In terms of processing, phosphorylated.

The protein localises to the nucleus. Its subcellular location is the nucleoplasm. Functionally, binds and inhibits CYCD2-1/CDKA-1 complex kinase activity. Regulates cell division which is crucial for plant growth, development and morphogenesis. May regulate early lateral root initiation by blocking the G1/S phase transition. Controls the mitosis-to-endocycle transition and the onset of the endoreduplication cycle during leaf development through inhibition of mitotic CDKA-1 kinase complexes. Specifically targets CDKA-1. This is Cyclin-dependent kinase inhibitor 2 (KRP2) from Arabidopsis thaliana (Mouse-ear cress).